A 496-amino-acid chain; its full sequence is NADH-quinone oxidoreductase subunit N (496 aa).

14 helical membrane passes run 12–32, 43–63, 79–99, 108–128, 132–152, 166–186, 207–227, 257–277, 280–300, 306–326, 333–353, 383–403, 416–436, and 464–484; these read LNLI…IILI, SLYV…TLGL, VSIV…PLAL, SYPE…FMVA, LILI…LIAL, FTMG…IYAL, GLMI…AFKL, VAAF…GVEW, VVIL…ALVQ, MLAY…ALDT, IFFY…MLWM, AVIM…SIFW, GYVW…YYYL, and AVVG…QPLV.

It belongs to the complex I subunit 2 family. NDH-1 is composed of 14 different subunits. Subunits NuoA, H, J, K, L, M, N constitute the membrane sector of the complex.

Its subcellular location is the cell inner membrane. The catalysed reaction is a quinone + NADH + 5 H(+)(in) = a quinol + NAD(+) + 4 H(+)(out). Functionally, NDH-1 shuttles electrons from NADH, via FMN and iron-sulfur (Fe-S) centers, to quinones in the respiratory chain. The immediate electron acceptor for the enzyme in this species is believed to be ubiquinone. Couples the redox reaction to proton translocation (for every two electrons transferred, four hydrogen ions are translocated across the cytoplasmic membrane), and thus conserves the redox energy in a proton gradient. This chain is NADH-quinone oxidoreductase subunit N, found in Sulfurovum sp. (strain NBC37-1).